The sequence spans 291 residues: Shikimate dehydrogenase (NADP(+)) (291 aa).

Shikimate-binding positions include 26–28 and serine 73; that span reads SLS. Residue lysine 77 is the Proton acceptor of the active site. Shikimate is bound by residues asparagine 98 and aspartate 113. Residues 137–141 and valine 238 each bind NADP(+); that span reads GAGGA. Tyrosine 240 provides a ligand contact to shikimate. Glycine 261 contacts NADP(+).

The protein belongs to the shikimate dehydrogenase family. As to quaternary structure, homodimer.

It carries out the reaction shikimate + NADP(+) = 3-dehydroshikimate + NADPH + H(+). The protein operates within metabolic intermediate biosynthesis; chorismate biosynthesis; chorismate from D-erythrose 4-phosphate and phosphoenolpyruvate: step 4/7. Involved in the biosynthesis of the chorismate, which leads to the biosynthesis of aromatic amino acids. Catalyzes the reversible NADPH linked reduction of 3-dehydroshikimate (DHSA) to yield shikimate (SA). This is Shikimate dehydrogenase (NADP(+)) from Listeria innocua serovar 6a (strain ATCC BAA-680 / CLIP 11262).